A 1162-amino-acid chain; its full sequence is Paired amphipathic helix protein Sin3-like 5 (1162 aa).

The disordered stretch occupies residues 1–37 (MKRVREEVYVEPQMRGPTVSSRGETNGRPSTISGGGT). Polar residues predominate over residues 18-30 (TVSSRGETNGRPS). PAH domains are found at residues 28–109 (RPST…LPKG) and 123–193 (KPVD…LPDF). 4 disordered regions span residues 702–727 (RVSD…ESCE), 743–779 (QKLP…DDDN), 803–830 (GGQV…SNEG), and 1121–1143 (KKAT…ELSR). Serine 817 is modified (phosphoserine). Over residues 1123–1139 (ATLNPTGPENVKTSDSS) the composition is skewed to polar residues.

It localises to the nucleus. Functionally, acts as a transcriptional repressor. Plays roles in regulating gene expression and genome stability. The sequence is that of Paired amphipathic helix protein Sin3-like 5 (SNL5) from Arabidopsis thaliana (Mouse-ear cress).